The following is a 182-amino-acid chain: Capsid protein (182 aa).

A disordered region spans residues 136-182 (NAPILSTLPETTVVRRRRPSGRRTPSPRRRRSQSPRRRRSQSPASSC). Over residues 149–175 (VRRRRPSGRRTPSPRRRRSQSPRRRRS) the composition is skewed to basic residues. The short motif at 157–174 (RRTPSPRRRRSQSPRRRR) is the Bipartite nuclear localization signal element. 2 positions are modified to phosphoserine; by host: serine 161 and serine 169. 2 tandem repeats follow at residues 161-168 (SPRRRRSQ) and 169-176 (SPRRRRSQ). The segment at 161–176 (SPRRRRSQSPRRRRSQ) is 2 X 8 AA repeats of S-P-R-R-R-[PR]-S-Q. The interval 176-182 (QSPASSC) is RNA binding.

It belongs to the orthohepadnavirus core antigen family. In terms of assembly, homodimerizes, then multimerizes. Interacts with cytosol exposed regions of viral L glycoprotein present in the reticulum-to-Golgi compartment. Interacts with human FLNB. Phosphorylated form interacts with host importin alpha; this interaction depends on the exposure of the NLS, which itself depends upon genome maturation and/or phosphorylation of the capsid protein. Interacts with host NUP153. Phosphorylated by host SRPK1, SRPK2, and maybe protein kinase C or GAPDH. Phosphorylation is critical for pregenomic RNA packaging. Protein kinase C phosphorylation is stimulated by HBx protein and may play a role in transport of the viral genome to the nucleus at the late step during the viral replication cycle.

The protein localises to the virion. It localises to the host cytoplasm. Functionally, self assembles to form an icosahedral capsid. Most capsids appear to be large particles with an icosahedral symmetry of T=4 and consist of 240 copies of capsid protein, though a fraction forms smaller T=3 particles consisting of 180 capsid proteins. Entering capsids are transported along microtubules to the nucleus. Phosphorylation of the capsid is thought to induce exposure of nuclear localization signal in the C-terminal portion of the capsid protein that allows binding to the nuclear pore complex via the importin (karyopherin-) alpha and beta. Capsids are imported in intact form through the nuclear pore into the nuclear basket, where it probably binds NUP153. Only capsids that contain the mature viral genome can release the viral DNA and capsid protein into the nucleoplasm. Immature capsids get stuck in the basket. Capsids encapsulate the pre-genomic RNA and the P protein. Pre-genomic RNA is reverse-transcribed into DNA while the capsid is still in the cytoplasm. The capsid can then either be directed to the nucleus, providing more genomes for transcription, or bud through the endoplasmic reticulum to provide new virions. The sequence is that of Capsid protein from Woolly monkey hepatitis B virus (isolate Louisville) (WMHBV).